The following is a 531-amino-acid chain: Tryptophan 6-halogenase ThaL (531 aa).

Residues Gly-13, Thr-15, Ala-16, Ala-39, Ile-42, Ile-45, Val-47, and Ala-50 each coordinate FAD. Lys-79 is a catalytic residue. Pro-111 is an L-tryptophan binding site. FAD contacts are provided by Met-198 and Leu-349. 2 residues coordinate chloride: Ser-360 and Gly-361. Ile-362 contributes to the FAD binding site. L-tryptophan-binding residues include Tyr-454, Tyr-455, Glu-461, and Phe-465.

It belongs to the flavin-dependent halogenase family. Bacterial tryptophan halogenase subfamily. In terms of assembly, homodimer. Monomer in solution.

The catalysed reaction is L-tryptophan + FADH2 + chloride + O2 = 6-chloro-L-tryptophan + FAD + 2 H2O. The enzyme catalyses D-tryptophan + FADH2 + chloride + O2 = 6-chloro-D-tryptophan + FAD + 2 H2O. Involved in the biosynthesis of thienodolin, a plant growth-regulating compound. Catalyzes the chlorination of tryptophan (Trp) at C6 position to yield 6-chloro-tryptophan. It is also able to use bromide ions to generate monobrominated Trp. In vitro, accepts a wide range of amides and peptides carrying either L- or D-Trp at the N-terminus. This chain is Tryptophan 6-halogenase ThaL, found in Streptomyces albogriseolus.